Reading from the N-terminus, the 255-residue chain is uncharacterized protein (255 aa).

The first 23 residues, 1–23 (MKRLNKLVLGIIFLFLVISITAG), serve as a signal peptide directing secretion. C24 carries N-palmitoyl cysteine lipidation. C24 is lipidated: S-diacylglycerol cysteine.

This sequence belongs to the staphylococcal tandem lipoprotein family.

The protein localises to the cell membrane. This is an uncharacterized protein from Staphylococcus aureus (strain Mu50 / ATCC 700699).